A 457-amino-acid chain; its full sequence is Argininosuccinate lyase (457 aa).

Belongs to the lyase 1 family. Argininosuccinate lyase subfamily.

It is found in the cytoplasm. It catalyses the reaction 2-(N(omega)-L-arginino)succinate = fumarate + L-arginine. Its pathway is amino-acid biosynthesis; L-arginine biosynthesis; L-arginine from L-ornithine and carbamoyl phosphate: step 3/3. The sequence is that of Argininosuccinate lyase from Escherichia coli O1:K1 / APEC.